The following is a 363-amino-acid chain: Pyrimidine monooxygenase RutA (363 aa).

Residues 49–50 (IK), Asn-115, Glu-124, 140–141 (RY), and Ser-190 contribute to the FMN site.

The protein belongs to the NtaA/SnaA/DszA monooxygenase family. RutA subfamily.

The enzyme catalyses uracil + FMNH2 + NADH + O2 = (Z)-3-ureidoacrylate + FMN + NAD(+) + H2O + H(+). It carries out the reaction thymine + FMNH2 + NADH + O2 = (Z)-2-methylureidoacrylate + FMN + NAD(+) + H2O + H(+). Its function is as follows. Catalyzes the pyrimidine ring opening between N-3 and C-4 by an unusual flavin hydroperoxide-catalyzed mechanism, adding oxygen atoms in the process to yield ureidoacrylate peracid, that immediately reacts with FMN forming ureidoacrylate and FMN-N(5)-oxide. The FMN-N(5)-oxide reacts spontaneously with NADH to produce FMN. Requires the flavin reductase RutF to regenerate FMN in vivo. This chain is Pyrimidine monooxygenase RutA, found in Enterobacter cloacae subsp. cloacae (strain ATCC 13047 / DSM 30054 / NBRC 13535 / NCTC 10005 / WDCM 00083 / NCDC 279-56).